We begin with the raw amino-acid sequence, 29 residues long: Orphan peptide CllNtx (29 aa).

In terms of processing, contains 3 disulfide bonds. In terms of tissue distribution, expressed by the venom gland.

Its subcellular location is the secreted. Its function is as follows. May act as a toxin. This chain is Orphan peptide CllNtx, found in Centruroides limpidus (Mexican scorpion).